Here is an 872-residue protein sequence, read N- to C-terminus: MKTMTSAEVRQMFLDFFKSKGHTVEPSQSLVPVNDPTLLWINSGVATLKKYFDGSVVPENPRLTNAQKAIRTNDIENVGKTARHHTMFEMLGNFSIGDYFRNEAIAFAWELLTSSEWFEFPAEKLYITYYPADKDTYNRWVEVGVDPTHLVPIEDNFWEIGAGPSGPDTEIFFDRGEIYDPEHVGLKLLAEDIENDRYIEIWNIVLSQFNANPAIPRSEYPELPQKNIDTGMGLERMVCIIQGGKTNFDTDLFLPIIREIEKLSGITYSPDSENMSFKVIADHIRSLSFAIGDGALPGNEGRGYVLRRLLRRAVMHGKKLGIQGKFLASLVPTVGKIMQSYYPEVLEKEDFIMQIIDREEETFNRTIDAGQKLIDELLVNLKAEGKDRIEGADIFRLYDTYGFPVELTEELAEDEGFKIDHEGFKVAMKAQQDRARAAVVKGGSMGAQNETLSSIEVDSKFLYEDKKSQAKLLVAIKDDELVDEVTGKAQLVFDVTPFYAEMGGQVADHGVIKNADGQEVATVLDVQHAPHGQNLHSVETTSPLKVGETYTLEIDEERRSAVVKNHTATHLLHAALHNIVGNHALQAGSLNEVEFLRFDFTHFAQVTKEELAEIERQVNEVIWQSLKVETIETDIATAKEMGAMALFGEKYGKNVRVVKIGDYSIELCGGTHTQTTSQIGLFKIIKEEGIGSGVRRIIAVTGQKAYEAFKDAENTLSEVAGLVKAPQASQIVAKVSNLQDELKAAQKENDALAGKLAASQSDEIFKNVQRAGSVSFIASQVTVPDANGLRNLADIWKQKELSDVLVLVATIGEKVSLLVASKSSDVKAGNLVKELAPFVDGRGGGKPDMAMAGGSNAAGIPELLTAVAEKLG.

Residues His-566, His-570, Cys-668, and His-672 each contribute to the Zn(2+) site.

Belongs to the class-II aminoacyl-tRNA synthetase family. Zn(2+) is required as a cofactor.

It is found in the cytoplasm. The catalysed reaction is tRNA(Ala) + L-alanine + ATP = L-alanyl-tRNA(Ala) + AMP + diphosphate. Its function is as follows. Catalyzes the attachment of alanine to tRNA(Ala) in a two-step reaction: alanine is first activated by ATP to form Ala-AMP and then transferred to the acceptor end of tRNA(Ala). Also edits incorrectly charged Ser-tRNA(Ala) and Gly-tRNA(Ala) via its editing domain. This Lactococcus lactis subsp. cremoris (strain SK11) protein is Alanine--tRNA ligase.